The sequence spans 195 residues: Early light-induced protein 1, chloroplastic (195 aa).

Residues 1-46 constitute a chloroplast transit peptide; the sequence is MATASFNMQSVFAGGLTTRKINTNKLFSAGSFPNLKRNYPVGVRCM. The segment at 46–81 is disordered; sequence MAEGGPTNEDSSPAPSTSAAQPLPKSPSPPPPMKPK. Over residues 56-68 the composition is skewed to low complexity; it reads SSPAPSTSAAQPL. Over residues 69 to 79 the composition is skewed to pro residues; sequence PKSPSPPPPMK. A run of 3 helical transmembrane segments spans residues 104 to 124, 131 to 151, and 175 to 195; these read LAMV…ENVL, GVSW…VPLF, and FAML…GTLV.

Belongs to the ELIP/psbS family.

It is found in the plastid. The protein localises to the chloroplast thylakoid membrane. Prevents excess accumulation of free chlorophyll by inhibiting the entire chlorophyll biosynthesis pathway (e.g. 5-aminolevulinate synthesis and Mg-protoporphyrin IX chelatase activity), and hence prevent photooxidative stress. Probably involved in the integration of pigments into the mature light-harvesting pigment-protein complexes. Light-harvesting chlorophyll (LHC) a/b-binding protein required to ensure a high rate of chlorophyll accumulation during deetiolation in continuous high light. Involved in seed germination. May fulfill a photoprotective functions. The sequence is that of Early light-induced protein 1, chloroplastic from Arabidopsis thaliana (Mouse-ear cress).